The sequence spans 1072 residues: Carbamoyl phosphate synthase large chain (1072 aa).

The tract at residues 1-401 (MPKRLDINTI…SLLKAVRSLE (401 aa)) is carboxyphosphate synthetic domain. ATP-binding residues include R129, R169, G175, G176, K208, I210, E215, G241, V242, H243, Q284, and E298. Positions 133 to 327 (RTLMQDLNEP…IAKLAAKIAV (195 aa)) constitute an ATP-grasp 1 domain. Mg(2+) contacts are provided by Q284, E298, and N300. Q284, E298, and N300 together coordinate Mn(2+). The segment at 402-546 (LGIYHLELDH…YSTYADENES (145 aa)) is oligomerization domain. Residues 547-929 (IVTDRKSVVV…ALYKGLVASG (383 aa)) form a carbamoyl phosphate synthetic domain region. An ATP-grasp 2 domain is found at 671–861 (EAALTKLGIP…MANVATKVIL (191 aa)). ATP-binding residues include R707, R746, E752, G777, V778, H779, S780, Q820, and E832. Mg(2+) is bound by residues Q820, E832, and N834. The Mn(2+) site is built by Q820, E832, and N834. The MGS-like domain maps to 930 to 1072 (INIPTHGSVI…QTKRHEVVHA (143 aa)). The segment at 930-1072 (INIPTHGSVI…QTKRHEVVHA (143 aa)) is allosteric domain.

Belongs to the CarB family. In terms of assembly, composed of two chains; the small (or glutamine) chain promotes the hydrolysis of glutamine to ammonia, which is used by the large (or ammonia) chain to synthesize carbamoyl phosphate. Tetramer of heterodimers (alpha,beta)4. Mg(2+) is required as a cofactor. The cofactor is Mn(2+).

It carries out the reaction hydrogencarbonate + L-glutamine + 2 ATP + H2O = carbamoyl phosphate + L-glutamate + 2 ADP + phosphate + 2 H(+). The enzyme catalyses hydrogencarbonate + NH4(+) + 2 ATP = carbamoyl phosphate + 2 ADP + phosphate + 2 H(+). It participates in amino-acid biosynthesis; L-arginine biosynthesis; carbamoyl phosphate from bicarbonate: step 1/1. Its pathway is pyrimidine metabolism; UMP biosynthesis via de novo pathway; (S)-dihydroorotate from bicarbonate: step 1/3. Large subunit of the glutamine-dependent carbamoyl phosphate synthetase (CPSase). CPSase catalyzes the formation of carbamoyl phosphate from the ammonia moiety of glutamine, carbonate, and phosphate donated by ATP, constituting the first step of 2 biosynthetic pathways, one leading to arginine and/or urea and the other to pyrimidine nucleotides. The large subunit (synthetase) binds the substrates ammonia (free or transferred from glutamine from the small subunit), hydrogencarbonate and ATP and carries out an ATP-coupled ligase reaction, activating hydrogencarbonate by forming carboxy phosphate which reacts with ammonia to form carbamoyl phosphate. This chain is Carbamoyl phosphate synthase large chain, found in Bacillus cereus (strain B4264).